The following is a 651-amino-acid chain: p-hydroxybenzoic acid efflux pump subunit AaeB (651 aa).

11 helical membrane-spanning segments follow: residues 11–31 (FACK…WFEM), 41–61 (AAIV…SGAI), 65–85 (GLLR…IIMT), 91–111 (VVML…SSLV), 117–137 (YVFA…QSSP), 150–170 (EIIL…PRSV), 367–387 (LFWL…LGVV), 404–424 (FLIG…LVLP), 428–448 (QSLL…GIEI), 454–474 (GSLG…PMTF), and 480–500 (LDNA…IMLI).

The protein belongs to the aromatic acid exporter ArAE (TC 2.A.85) family.

It localises to the cell inner membrane. Functionally, forms an efflux pump with AaeA. Could function as a metabolic relief valve, allowing to eliminate certain compounds when they accumulate to high levels in the cell. This Musicola paradisiaca (strain Ech703) (Dickeya paradisiaca) protein is p-hydroxybenzoic acid efflux pump subunit AaeB.